Reading from the N-terminus, the 609-residue chain is UvrABC system protein C (609 aa).

The region spanning Ser-16 to Val-94 is the GIY-YIG domain. Residues Leu-203–Val-238 form the UVR domain.

It belongs to the UvrC family. Interacts with UvrB in an incision complex.

The protein localises to the cytoplasm. Its function is as follows. The UvrABC repair system catalyzes the recognition and processing of DNA lesions. UvrC both incises the 5' and 3' sides of the lesion. The N-terminal half is responsible for the 3' incision and the C-terminal half is responsible for the 5' incision. The sequence is that of UvrABC system protein C from Shewanella sediminis (strain HAW-EB3).